The primary structure comprises 643 residues: Phosphomethylpyrimidine synthase (643 aa).

Residues N248, M277, Y306, H342, 362–364, 403–406, and E442 contribute to the substrate site; these read SRG and DGLR. H446 is a Zn(2+) binding site. Y469 serves as a coordination point for substrate. H510 lines the Zn(2+) pocket. Residues C590, C593, and C598 each contribute to the [4Fe-4S] cluster site.

Belongs to the ThiC family. Homodimer. The cofactor is [4Fe-4S] cluster.

The enzyme catalyses 5-amino-1-(5-phospho-beta-D-ribosyl)imidazole + S-adenosyl-L-methionine = 4-amino-2-methyl-5-(phosphooxymethyl)pyrimidine + CO + 5'-deoxyadenosine + formate + L-methionine + 3 H(+). Its pathway is cofactor biosynthesis; thiamine diphosphate biosynthesis. Catalyzes the synthesis of the hydroxymethylpyrimidine phosphate (HMP-P) moiety of thiamine from aminoimidazole ribotide (AIR) in a radical S-adenosyl-L-methionine (SAM)-dependent reaction. This Paraburkholderia phytofirmans (strain DSM 17436 / LMG 22146 / PsJN) (Burkholderia phytofirmans) protein is Phosphomethylpyrimidine synthase.